Here is a 141-residue protein sequence, read N- to C-terminus: Hemoglobin subunit alpha (141 aa).

The Globin domain occupies 1-141; that stretch reads VLSATDKANV…VATVLTSKYR (141 aa). The residue at position 3 (Ser3) is a Phosphoserine. N6-succinyllysine is present on residues Lys7 and Lys11. Residue Lys16 is modified to N6-acetyllysine; alternate. An N6-succinyllysine; alternate modification is found at Lys16. The residue at position 24 (Tyr24) is a Phosphotyrosine. Position 40 is an N6-succinyllysine (Lys40). His58 contacts O2. Residue His87 coordinates heme b. Residue Ser102 is modified to Phosphoserine. Thr108 carries the post-translational modification Phosphothreonine. Residue Ser124 is modified to Phosphoserine. Phosphothreonine is present on residues Thr134 and Thr137. Ser138 bears the Phosphoserine mark.

The protein belongs to the globin family. As to quaternary structure, heterotetramer of two alpha chains and two beta chains. In terms of tissue distribution, red blood cells.

Functionally, involved in oxygen transport from the lung to the various peripheral tissues. Its function is as follows. Hemopressin acts as an antagonist peptide of the cannabinoid receptor CNR1. Hemopressin-binding efficiently blocks cannabinoid receptor CNR1 and subsequent signaling. This Erinaceus europaeus (Western European hedgehog) protein is Hemoglobin subunit alpha (HBA).